The sequence spans 609 residues: Threonine--tRNA ligase (609 aa).

Positions 1-145 (MRLLLIHSDY…TIVPGAGAAV (145 aa)) are editing domain. Residues 194 to 485 (IHVDLMRSKE…TANQSVPQLP (292 aa)) are catalytic. Zn(2+) contacts are provided by Cys-286, His-338, and His-458.

The protein belongs to the class-II aminoacyl-tRNA synthetase family. In terms of assembly, homodimer. The cofactor is Zn(2+).

The protein localises to the cytoplasm. The catalysed reaction is tRNA(Thr) + L-threonine + ATP = L-threonyl-tRNA(Thr) + AMP + diphosphate + H(+). In terms of biological role, catalyzes the attachment of threonine to tRNA(Thr) in a two-step reaction: L-threonine is first activated by ATP to form Thr-AMP and then transferred to the acceptor end of tRNA(Thr). Also edits incorrectly charged L-seryl-tRNA(Thr). In Methanosphaerula palustris (strain ATCC BAA-1556 / DSM 19958 / E1-9c), this protein is Threonine--tRNA ligase.